The sequence spans 44 residues: Cytochrome b559 subunit beta (44 aa).

Residues 19-35 (WLAIHGIAVPTIFFLGA) traverse the membrane as a helical segment. His-23 contacts heme.

Belongs to the PsbE/PsbF family. Heterodimer of an alpha subunit and a beta subunit. PSII is composed of 1 copy each of membrane proteins PsbA, PsbB, PsbC, PsbD, PsbE, PsbF, PsbH, PsbI, PsbJ, PsbK, PsbL, PsbM, PsbT, PsbX, PsbY, PsbZ, Psb30/Ycf12, at least 3 peripheral proteins of the oxygen-evolving complex and a large number of cofactors. It forms dimeric complexes. Requires heme b as cofactor.

It is found in the plastid. The protein resides in the chloroplast thylakoid membrane. This b-type cytochrome is tightly associated with the reaction center of photosystem II (PSII). PSII is a light-driven water:plastoquinone oxidoreductase that uses light energy to abstract electrons from H(2)O, generating O(2) and a proton gradient subsequently used for ATP formation. It consists of a core antenna complex that captures photons, and an electron transfer chain that converts photonic excitation into a charge separation. This is Cytochrome b559 subunit beta from Chlamydomonas reinhardtii (Chlamydomonas smithii).